A 138-amino-acid chain; its full sequence is Small ribosomal subunit protein uS8c (138 aa).

The protein belongs to the universal ribosomal protein uS8 family. As to quaternary structure, part of the 30S ribosomal subunit.

It localises to the plastid. The protein localises to the chloroplast. In terms of biological role, one of the primary rRNA binding proteins, it binds directly to 16S rRNA central domain where it helps coordinate assembly of the platform of the 30S subunit. This chain is Small ribosomal subunit protein uS8c (rps8), found in Oenothera elata subsp. hookeri (Hooker's evening primrose).